Consider the following 270-residue polypeptide: Putative pyruvate, phosphate dikinase regulatory protein (270 aa).

Position 151–158 (151–158) interacts with ADP; the sequence is GVSRTSKT.

The protein belongs to the pyruvate, phosphate/water dikinase regulatory protein family. PDRP subfamily.

It catalyses the reaction N(tele)-phospho-L-histidyl/L-threonyl-[pyruvate, phosphate dikinase] + ADP = N(tele)-phospho-L-histidyl/O-phospho-L-threonyl-[pyruvate, phosphate dikinase] + AMP + H(+). The enzyme catalyses N(tele)-phospho-L-histidyl/O-phospho-L-threonyl-[pyruvate, phosphate dikinase] + phosphate + H(+) = N(tele)-phospho-L-histidyl/L-threonyl-[pyruvate, phosphate dikinase] + diphosphate. Functionally, bifunctional serine/threonine kinase and phosphorylase involved in the regulation of the pyruvate, phosphate dikinase (PPDK) by catalyzing its phosphorylation/dephosphorylation. In Lysinibacillus sphaericus (strain C3-41), this protein is Putative pyruvate, phosphate dikinase regulatory protein.